A 32-amino-acid chain; its full sequence is uncharacterized protein (32 aa).

This is an uncharacterized protein from Saccharomyces cerevisiae (strain ATCC 204508 / S288c) (Baker's yeast).